The primary structure comprises 172 residues: Small ribosomal subunit protein uS5 (172 aa).

In terms of domain architecture, S5 DRBM spans 11–74; sequence LSEVLVDVNR…QAAKKRMMKV (64 aa).

This sequence belongs to the universal ribosomal protein uS5 family. As to quaternary structure, part of the 30S ribosomal subunit. Contacts proteins S4 and S8.

In terms of biological role, with S4 and S12 plays an important role in translational accuracy. Located at the back of the 30S subunit body where it stabilizes the conformation of the head with respect to the body. The protein is Small ribosomal subunit protein uS5 of Rickettsia canadensis (strain McKiel).